Here is a 542-residue protein sequence, read N- to C-terminus: Chaperonin GroEL 2 (542 aa).

Residues 30–33 (TLGP), lysine 51, 87–91 (DGTTT), glycine 415, and aspartate 496 contribute to the ATP site.

It belongs to the chaperonin (HSP60) family. As to quaternary structure, forms a cylinder of 14 subunits composed of two heptameric rings stacked back-to-back. Interacts with the co-chaperonin GroES.

It is found in the cytoplasm. The catalysed reaction is ATP + H2O + a folded polypeptide = ADP + phosphate + an unfolded polypeptide.. Together with its co-chaperonin GroES, plays an essential role in assisting protein folding. The GroEL-GroES system forms a nano-cage that allows encapsulation of the non-native substrate proteins and provides a physical environment optimized to promote and accelerate protein folding. The chain is Chaperonin GroEL 2 from Mesorhizobium japonicum (strain LMG 29417 / CECT 9101 / MAFF 303099) (Mesorhizobium loti (strain MAFF 303099)).